Reading from the N-terminus, the 145-residue chain is Putative antiporter subunit mnhG2 (145 aa).

3 consecutive transmembrane segments (helical) span residues 11 to 31, 51 to 71, and 72 to 92; these read IAAVMLLLGSFIALISAIGIV, VLLTLIGVLIYFIVNTGFFSV, and RLLLSLVFINLTSPVGMHLVA.

Belongs to the CPA3 antiporters (TC 2.A.63) subunit G family. In terms of assembly, may form a heterooligomeric complex that consists of seven subunits: mnhA2, mnhB2, mnhC2, mnhD2, mnhE2, mnhF2 and mnhG2.

Its subcellular location is the cell membrane. The protein is Putative antiporter subunit mnhG2 (mnhG2) of Staphylococcus aureus (strain MRSA252).